Consider the following 345-residue polypeptide: Ubiquinone biosynthesis O-methyltransferase, mitochondrial (345 aa).

Residues 1-86 constitute a mitochondrion transit peptide; sequence MWRGGRLSSR…TYRSSWKKLY (86 aa). Arginine 124 serves as a coordination point for S-adenosyl-L-methionine. Residues lysine 143 and lysine 149 each carry the N6-acetyllysine modification. Glycine 154 and aspartate 175 together coordinate S-adenosyl-L-methionine. N6-acetyllysine is present on lysine 196. Residue serine 222 coordinates S-adenosyl-L-methionine. Mg(2+)-binding residues include glutamate 223, glutamate 226, and histidine 227.

Belongs to the class I-like SAM-binding methyltransferase superfamily. UbiG/COQ3 family. Component of a multi-subunit COQ enzyme complex, composed of at least COQ3, COQ4, COQ5, COQ6, COQ7 and COQ9. Mg(2+) is required as a cofactor.

The protein resides in the mitochondrion inner membrane. The catalysed reaction is 3,4-dihydroxy-5-(all-trans-decaprenyl)benzoate + S-adenosyl-L-methionine = 4-hydroxy-3-methoxy-5-(all-trans-decaprenyl)benzoate + S-adenosyl-L-homocysteine + H(+). It carries out the reaction a 3-demethylubiquinone + S-adenosyl-L-methionine = a ubiquinone + S-adenosyl-L-homocysteine. The enzyme catalyses 3-demethylubiquinol-10 + S-adenosyl-L-methionine = ubiquinol-10 + S-adenosyl-L-homocysteine + H(+). The protein operates within cofactor biosynthesis; ubiquinone biosynthesis. Its function is as follows. O-methyltransferase required for two non-consecutive steps during ubiquinone biosynthesis. Catalyzes the 2 O-methylation of 3,4-dihydroxy-5-(all-trans-decaprenyl)benzoic acid into 4-hydroxy-3-methoxy-5-(all-trans-decaprenyl)benzoic acid. Also catalyzes the last step of ubiquinone biosynthesis by mediating methylation of 3-demethylubiquinone into ubiquinone. Also able to mediate the methylation of 3-demethylubiquinol-10 into ubiquinol-10. The chain is Ubiquinone biosynthesis O-methyltransferase, mitochondrial from Rattus norvegicus (Rat).